The chain runs to 325 residues: Probable isoaspartyl peptidase/L-asparaginase GA20639 (325 aa).

Residue Thr184 is the Nucleophile of the active site. Residues 212-215 and 235-238 contribute to the substrate site; these read RIGD and TGHG.

Belongs to the Ntn-hydrolase family. As to quaternary structure, heterodimer of an alpha and beta chain produced by autocleavage. Cleaved into an alpha and beta chain by autocatalysis; this activates the enzyme. The N-terminal residue of the beta subunit is responsible for the nucleophile hydrolase activity.

The enzyme catalyses L-asparagine + H2O = L-aspartate + NH4(+). It catalyses the reaction Cleavage of a beta-linked Asp residue from the N-terminus of a polypeptide.. In terms of biological role, has both L-asparaginase and beta-aspartyl peptidase activity. Does not have aspartylglucosaminidase activity and is inactive toward GlcNAc-L-Asn. Likewise, has no activity toward glutamine. The sequence is that of Probable isoaspartyl peptidase/L-asparaginase GA20639 from Drosophila pseudoobscura pseudoobscura (Fruit fly).